Here is a 333-residue protein sequence, read N- to C-terminus: Tetraacyldisaccharide 4'-kinase (333 aa).

Residue 55–62 (TIGGNGKT) coordinates ATP.

The protein belongs to the LpxK family.

The enzyme catalyses a lipid A disaccharide + ATP = a lipid IVA + ADP + H(+). The protein operates within glycolipid biosynthesis; lipid IV(A) biosynthesis; lipid IV(A) from (3R)-3-hydroxytetradecanoyl-[acyl-carrier-protein] and UDP-N-acetyl-alpha-D-glucosamine: step 6/6. Its function is as follows. Transfers the gamma-phosphate of ATP to the 4'-position of a tetraacyldisaccharide 1-phosphate intermediate (termed DS-1-P) to form tetraacyldisaccharide 1,4'-bis-phosphate (lipid IVA). The chain is Tetraacyldisaccharide 4'-kinase from Blochmanniella floridana.